The primary structure comprises 545 residues: Chaperonin GroEL (545 aa).

Residues Thr29–Pro32, Lys50, Asp86–Thr90, Gly415, and Asp495 each bind ATP.

It belongs to the chaperonin (HSP60) family. As to quaternary structure, forms a cylinder of 14 subunits composed of two heptameric rings stacked back-to-back. Interacts with the co-chaperonin GroES.

It is found in the cytoplasm. The catalysed reaction is ATP + H2O + a folded polypeptide = ADP + phosphate + an unfolded polypeptide.. Its function is as follows. Together with its co-chaperonin GroES, plays an essential role in assisting protein folding. The GroEL-GroES system forms a nano-cage that allows encapsulation of the non-native substrate proteins and provides a physical environment optimized to promote and accelerate protein folding. The sequence is that of Chaperonin GroEL from Bacteroides fragilis (strain ATCC 25285 / DSM 2151 / CCUG 4856 / JCM 11019 / LMG 10263 / NCTC 9343 / Onslow / VPI 2553 / EN-2).